Reading from the N-terminus, the 261-residue chain is X-box-binding protein 1 (261 aa).

The Cytoplasmic segment spans residues 1–185 (MVVVAPAQSP…VQAQLSPLQN (185 aa)). Residues 27 to 37 (TGGAPAGRALP) show a composition bias toward low complexity. The disordered stretch occupies residues 27 to 65 (TGGAPAGRALPVMVPGQQGASPEGASGVPPQARKRQRLT). Ser47 and Ser68 each carry phosphoserine. One can recognise a bZIP domain in the interval 70–133 (EEKALRRKLK…HGLVVENQEL (64 aa)). The segment at 72–94 (KALRRKLKNRVAAQTARDRKKAR) is basic motif. The segment at 76 to 92 (RKLKNRVAAQTARDRKK) is nuclear localization signal (NLS). Residues 98 to 133 (LEQQVVDLEEENQKLLLENQLLREKTHGLVVENQEL) form a leucine-zipper region. The helical; Signal-anchor for type II membrane protein transmembrane segment at 186-203 (ISPWTLMALTLQTLSLTS) threads the bilayer. Topologically, residues 204–261 (CWAFCSTWTQSCSSDVLPQSLPAWSSSQKWTQKDPVPYRPPLLHPWGRHQPSWKPLMN) are lumenal.

Belongs to the bZIP family. As to quaternary structure, isoform 1 interacts with HM13. Isoform 1 interacts with RNF139; the interaction induces ubiquitination and degradation of isoform 1. Isoform 1 interacts (via luminal domain) with DERL1; the interaction obviates the need for ectodomain shedding prior HM13/SPP-mediated XBP1 isoform 1 cleavage. Isoform 1 interacts with HDAC3 and AKT1; the interactions occur in endothelial cell (EC) under disturbed flow. Isoform 1 interacts with the oncoprotein FOS. Interacts with SIRT1. In terms of processing, isoform 1 is ubiquitinated, leading to proteasome-mediated degradation in response to ER stress. X-box-binding protein 1, cytoplasmic form and luminal form are produced by intramembrane proteolytic cleavage of ER membrane-anchored isoform 1 triggered by HM13/SPP in a DERL1-RNF139-dependent and VCP/p97-independent manner. X-box-binding protein 1, luminal form is ubiquitinated leading to proteasomal degradation. Post-translationally, acetylated by EP300; acetylation positively regulates the transcriptional activity of XBP1. Deacetylated by SIRT1; deacetylation negatively regulates the transcriptional activity of XBP1.

Its subcellular location is the nucleus. It is found in the endoplasmic reticulum. It localises to the cytoplasm. The protein resides in the endoplasmic reticulum membrane. The protein localises to the membrane. In terms of biological role, functions as a transcription factor during endoplasmic reticulum (ER) stress by regulating the unfolded protein response (UPR). Required for cardiac myogenesis and hepatogenesis during embryonic development, and the development of secretory tissues such as exocrine pancreas and salivary gland. Involved in terminal differentiation of B lymphocytes to plasma cells and production of immunoglobulins. Modulates the cellular response to ER stress in a PIK3R-dependent manner. Binds to the cis-acting X box present in the promoter regions of major histocompatibility complex class II genes. Involved in VEGF-induced endothelial cell (EC) proliferation and retinal blood vessel formation during embryonic development but also for angiogenesis in adult tissues under ischemic conditions. Functions also as a major regulator of the UPR in obesity-induced insulin resistance and type 2 diabetes for the management of obesity and diabetes prevention. Acts as a weak transcriptional factor. Together with HDAC3, contributes to the activation of NFE2L2-mediated HMOX1 transcription factor gene expression in a PI(3)K/mTORC2/Akt-dependent signaling pathway leading to EC survival under disturbed flow/oxidative stress. Binds to the ER stress response element (ERSE) upon ER stress. Binds to the consensus 5'-GATGACGTG[TG]N(3)[AT]T-3' sequence related to cAMP responsive element (CRE)-like sequences. Associates preferentially to the HDAC3 gene promoter region in a static flow-dependent manner. Binds to the CDH5/VE-cadherin gene promoter region. The sequence is that of X-box-binding protein 1 from Bos taurus (Bovine).